The following is a 657-amino-acid chain: Regulator of MON1-CCZ1 complex (657 aa).

The Mic1 domain maps to 471–637 (KKEMPHKFVI…NFTPGEHCEE (167 aa)).

This sequence belongs to the RMC1 family. As to quaternary structure, found in a complex with RMC1, CCZ1 MON1A and MON1B.

Its subcellular location is the lysosome membrane. It is found in the late endosome membrane. In terms of biological role, component of the CCZ1-MON1 RAB7A guanine exchange factor (GEF). Acts as a positive regulator of CCZ1-MON1A/B function necessary for endosomal/autophagic flux and efficient RAB7A localization. The protein is Regulator of MON1-CCZ1 complex of Homo sapiens (Human).